The chain runs to 182 residues: Adenylate kinase (182 aa).

Residue 12–17 coordinates ATP; sequence GAGKGT. An NMP region spans residues 32–61; it reads STGDLLRAEVGAKTPLGQEAAAVMNRGELV. AMP-binding positions include Thr-33, Arg-38, 59-61, 85-88, and Gln-92; these read ELV and GFPR. Residues 126–132 are LID; the sequence is SRGRSDD. Arg-127 is an ATP binding site. 2 residues coordinate AMP: Arg-129 and Arg-140. Residue Gly-168 coordinates ATP.

This sequence belongs to the adenylate kinase family. Monomer.

It is found in the cytoplasm. The enzyme catalyses AMP + ATP = 2 ADP. It functions in the pathway purine metabolism; AMP biosynthesis via salvage pathway; AMP from ADP: step 1/1. Functionally, catalyzes the reversible transfer of the terminal phosphate group between ATP and AMP. Plays an important role in cellular energy homeostasis and in adenine nucleotide metabolism. In Prochlorococcus marinus (strain MIT 9303), this protein is Adenylate kinase.